Consider the following 206-residue polypeptide: Probable GTP-binding protein EngB (206 aa).

The region spanning 8 to 195 is the EngB-type G domain; the sequence is RSDEVVLVGR…EDAVNSHFDA (188 aa). GTP contacts are provided by residues 16-23, 41-45, 60-63, 140-143, and 175-177; these read GRSNVGKS, GVTRQ, DLPG, NKMD, and ITA. Residues S23 and T43 each contribute to the Mg(2+) site.

The protein belongs to the TRAFAC class TrmE-Era-EngA-EngB-Septin-like GTPase superfamily. EngB GTPase family. The cofactor is Mg(2+).

Functionally, necessary for normal cell division and for the maintenance of normal septation. This is Probable GTP-binding protein EngB from Halobacterium salinarum (strain ATCC 29341 / DSM 671 / R1).